The following is a 182-amino-acid chain: UPF0316 protein BCQ_3166 (182 aa).

Helical transmembrane passes span 6 to 26 (LIFV…ILLV), 32 to 52 (SAAA…GIVF), and 58 to 78 (WMNI…GGYI).

This sequence belongs to the UPF0316 family.

Its subcellular location is the cell membrane. The polypeptide is UPF0316 protein BCQ_3166 (Bacillus cereus (strain Q1)).